Reading from the N-terminus, the 484-residue chain is UDP-N-acetylmuramate--L-alanine ligase (484 aa).

128–134 (GTHGKTT) is a binding site for ATP.

This sequence belongs to the MurCDEF family.

Its subcellular location is the cytoplasm. The enzyme catalyses UDP-N-acetyl-alpha-D-muramate + L-alanine + ATP = UDP-N-acetyl-alpha-D-muramoyl-L-alanine + ADP + phosphate + H(+). It functions in the pathway cell wall biogenesis; peptidoglycan biosynthesis. Functionally, cell wall formation. The sequence is that of UDP-N-acetylmuramate--L-alanine ligase from Shewanella loihica (strain ATCC BAA-1088 / PV-4).